The sequence spans 119 residues: NLIHFSSMIKCTIPGSKPVPDYSDYGCYCGKGGSGTPVDALDRCCQVHDKCYGDAESIYGCTPFLTYYSYECSERQDLCRGNGTKCKAFVCNCDRLAALCFAKAPYNKKNYNINLNRCK.

Intrachain disulfides connect cysteine 11/cysteine 72, cysteine 27/cysteine 118, cysteine 29/cysteine 45, cysteine 44/cysteine 100, cysteine 51/cysteine 93, cysteine 61/cysteine 86, and cysteine 79/cysteine 91. Ca(2+) contacts are provided by tyrosine 28, glycine 30, and glycine 32. Residue histidine 48 is part of the active site. Position 49 (aspartate 49) interacts with Ca(2+). Asparagine 82 is a glycosylation site (N-linked (GlcNAc...) asparagine). Aspartate 94 is a catalytic residue.

It belongs to the phospholipase A2 family. Group I subfamily. D49 sub-subfamily. Ca(2+) is required as a cofactor. Expressed by the venom gland.

Its subcellular location is the secreted. It catalyses the reaction a 1,2-diacyl-sn-glycero-3-phosphocholine + H2O = a 1-acyl-sn-glycero-3-phosphocholine + a fatty acid + H(+). Snake venom phospholipase A2 (PLA2) that shows weak myotoxicity and induces edema in mice. Shows no cytotoxicity in vitro. Has an anticoagulant effect in vitro. PLA2 catalyzes the calcium-dependent hydrolysis of the 2-acyl groups in 3-sn-phosphoglycerides. In Micrurus mipartitus (Red-tailed coral snake), this protein is Basic phospholipase A2.